The following is a 351-amino-acid chain: Chorismate synthase (351 aa).

Positions 39–60 (EDIQRDLERRRPGKRLTSPRGE) are disordered. Residues Arg-48 and Arg-53 each contribute to the NADP(+) site. Residues 124 to 126 (RSS), Ala-276, 291 to 295 (KPIPS), and Arg-317 contribute to the FMN site.

Belongs to the chorismate synthase family. As to quaternary structure, homotetramer. FMNH2 serves as cofactor.

The enzyme catalyses 5-O-(1-carboxyvinyl)-3-phosphoshikimate = chorismate + phosphate. It functions in the pathway metabolic intermediate biosynthesis; chorismate biosynthesis; chorismate from D-erythrose 4-phosphate and phosphoenolpyruvate: step 7/7. In terms of biological role, catalyzes the anti-1,4-elimination of the C-3 phosphate and the C-6 proR hydrogen from 5-enolpyruvylshikimate-3-phosphate (EPSP) to yield chorismate, which is the branch point compound that serves as the starting substrate for the three terminal pathways of aromatic amino acid biosynthesis. This reaction introduces a second double bond into the aromatic ring system. This is Chorismate synthase from Syntrophobacter fumaroxidans (strain DSM 10017 / MPOB).